Here is a 1175-residue protein sequence, read N- to C-terminus: uncharacterized protein (1175 aa).

586–593 (GPAGTGKT) contributes to the ATP binding site.

This is an uncharacterized protein from Methanocaldococcus jannaschii (strain ATCC 43067 / DSM 2661 / JAL-1 / JCM 10045 / NBRC 100440) (Methanococcus jannaschii).